A 422-amino-acid polypeptide reads, in one-letter code: UDP-N-acetyl-D-glucosamine 6-dehydrogenase (422 aa).

NAD(+) contacts are provided by Val-14, Asp-32, Arg-37, Thr-83, and Thr-118. Residue Cys-258 is the Nucleophile of the active site. Residue Arg-329 coordinates NAD(+).

This sequence belongs to the UDP-glucose/GDP-mannose dehydrogenase family.

The catalysed reaction is UDP-N-acetyl-alpha-D-glucosamine + 2 NAD(+) + H2O = UDP-2-acetamido-2-deoxy-alpha-D-glucuronate + 2 NADH + 3 H(+). Its pathway is bacterial outer membrane biogenesis; LPS O-antigen biosynthesis. With respect to regulation, requires either potassium or ammonium-containing salts for activity. Functionally, dehydrogenase required for the biosynthesis of the B-band O antigen of serotype O6 lipopolysaccharide. Is also required for flagellin glycosylation. Catalyzes the conversion of UDP-N-acetylglucosamine (UDP-GlcNAc) to UDP-N-acetylglucosaminuronic acid (UDP-GlcNAcA). Can also catalyze the conversion of UDP-N-acetyl-galactosamine (UDP-GalNAc) to UDP-N-acetylgalactosaminuronic acid (UDP-GalNAcA), with low efficiency. Can use NAD(+) or NADP(+), with a preference for NAD(+). In Pseudomonas aeruginosa, this protein is UDP-N-acetyl-D-glucosamine 6-dehydrogenase.